The chain runs to 378 residues: Cytochrome b (378 aa).

Transmembrane regions (helical) follow at residues F33–M53, W77–T98, W113–L133, and F178–L198. Residues H83 and H97 each coordinate heme b. Heme b contacts are provided by H182 and H196. H201 contributes to the a ubiquinone binding site. Transmembrane regions (helical) follow at residues T226–T246, L288–H308, I320–G340, and F347–P366.

Belongs to the cytochrome b family. As to quaternary structure, the cytochrome bc1 complex contains 11 subunits: 3 respiratory subunits (MT-CYB, CYC1 and UQCRFS1), 2 core proteins (UQCRC1 and UQCRC2) and 6 low-molecular weight proteins (UQCRH/QCR6, UQCRB/QCR7, UQCRQ/QCR8, UQCR10/QCR9, UQCR11/QCR10 and a cleavage product of UQCRFS1). This cytochrome bc1 complex then forms a dimer. Heme b is required as a cofactor.

Its subcellular location is the mitochondrion inner membrane. Component of the ubiquinol-cytochrome c reductase complex (complex III or cytochrome b-c1 complex) that is part of the mitochondrial respiratory chain. The b-c1 complex mediates electron transfer from ubiquinol to cytochrome c. Contributes to the generation of a proton gradient across the mitochondrial membrane that is then used for ATP synthesis. The protein is Cytochrome b (MT-CYB) of Cebus albifrons (White-fronted capuchin).